Here is an 893-residue protein sequence, read N- to C-terminus: Dystroglycan 1 (893 aa).

Positions 1–27 (MSVDNWLLHPLWGQTFLLLLSVAVAQA) are cleaved as a signal peptide. Residues 28–406 (HWPSEPSEAV…GQIRPTLTIP (379 aa)) are required for laminin recognition. The segment at 47-69 (SMHSVLSDFQEAVPTVVGIPDGT) is O-glycosylated at one site. An N-linked (GlcNAc...) asparagine glycan is attached at Asn139. Cysteines 180 and 262 form a disulfide. The segment at 314–483 (ATPTPVTAIG…PPTRIRTTTS (170 aa)) is mucin-like domain. Residues Thr315, Thr317, and Thr377 are each glycosylated (O-linked (Man6P...) threonine). Positions 379–498 (TLGPIQPTRV…GEPNQRPELK (120 aa)) are disordered. Low complexity predominate over residues 409–445 (VEPTAVITPPTTTTKKPRVSTPKPATPSTDSSTTTTR). Residues 461–483 (TTKAPITRLETASPPTRIRTTTS) form an O-glycosylated at seven sites with GalNAc region. A Peptidase S72 domain is found at 601 to 710 (KAPARFKARL…LSIAVTGSGS (110 aa)). Residues Asn639, Asn647, and Asn659 are each glycosylated (N-linked (GlcNAc...) asparagine). The Extracellular segment spans residues 652–751 (SIVVEWTNNT…SSEDDVYLHT (100 aa)). The cysteines at positions 667 and 711 are disulfide-linked. The interval 722–744 (PSPGSSAAPATEVPDRDPEKSSE) is disordered. A compositionally biased stretch (basic and acidic residues) spans 734-744 (VPDRDPEKSSE). A helical membrane pass occupies residues 752-772 (VIPAVVVAAILLIAGIIAMIC). The Cytoplasmic segment spans residues 773 to 893 (YRKKRKGKLT…YRSPPPYVPP (121 aa)). The Nuclear localization signal motif lies at 774 to 780 (RKKRKGK). A Phosphothreonine modification is found at Thr788. The required for interaction with CAV3 stretch occupies residues 817–893 (LQEEKAPLPP…YRSPPPYVPP (77 aa)). Positions 821 to 893 (KAPLPPPEYP…YRSPPPYVPP (73 aa)) are disordered. The segment covering 830 to 844 (PNQSMPETTPLNQDT) has biased composition (polar residues). Residues 857–868 (NAPPYQPPPPFT) show a composition bias toward pro residues. The interval 878–893 (PKNMTPYRSPPPYVPP) is required for binding DMD and UTRN. The short motif at 887 to 890 (PPPY) is the PPXY motif element. The residue at position 890 (Tyr890) is a Phosphotyrosine; by SRC.

Monomer. Heterodimer of alpha- and beta-dystroglycan subunits which are the central components of the dystrophin-glycoprotein complex. This complex then can form a dystrophin-associated glycoprotein complex (DGC) which is composed of three subcomplexes: a cytoplasmic complex comprised of DMD (or UTRN), DTNA and a number of syntrophins, such as SNTB1, SNTB2, SNTG1 and SNTG2, the transmembrane dystroglycan complex, and the sarcoglycan-sarcospan complex. Interacts (via the N-terminal of alphaDAG1) with LARGE1; the interaction enhances laminin binding. Interacts with SGCD. Interacts with AGR2 and AGR3. Interacts (betaDAG1) with DMD; the interaction is inhibited by phosphorylation on the PPXY motif. Interacts (betaDAG1, via its PPXY motif) with UTRN (via its WWW and ZZ domains); the interaction is inhibited by phosphorylation on the PPXY motif. Interacts (betaDAG1, via its phosphorylated PPXY motif) with the SH2 domain-containing proteins, FYN, CSK, NCK and SHC. Interacts (betaDAG1) with CAV3 (via a central WW-like domain); the interaction disrupts the binding of DMD. BetaDAG1 directly interacts with ANK3, but not with ANK2; this interaction does not interfere with DMD-binding and is required for retention at costameres. Identified in a dystroglycan complex that contains at least PRX, DRP2, UTRN, DMD and DAG1. Interacts with POMGNT1. BetaDAG1 interacts with CD93. In terms of processing, O-glycosylated. POMGNT1 catalyzes the initial addition of N-acetylglucosamine, giving rise to the GlcNAc(beta1-2)Man(alpha1-)O-Ser/Thr moiety and thus providing the necessary basis for the addition of further carbohydrate moieties. Heavily O-glycosylated comprising of up to two thirds of its mass and the carbohydrate composition differs depending on tissue type. Mucin-type O-glycosylation is important for ligand binding activity. O-mannosylation is found in high abundance in both brain and muscle where the most abundant glycan is Sia-alpha-2-3-Gal-beta-1-4-Glc-NAc-beta-1-2-Man. In muscle, glycosylation on Thr-315, Thr-317, Thr-379 by a phosphorylated O-mannosyl glycan with the structure 2-(N-acetylamido)-2-deoxygalactosyl-beta-1,3-2-(N-acetylamido)-2-deoxyglucosyl-beta-1,4-6-phosphomannose is mediated by like-acetylglucosaminyltransferase (LARGE1) protein amd is required for laminin binding. O-glycosylated in the N-terminal region with a core 1 or possibly core 8 glycan. The brain form displays a unique glycosylation pattern which is absent in other tissues; this form shows enhanced binding to laminin LAMA5 compared to the skeletal muscle form. Post-translationally, N-glycosylated. Autolytic cleavage produces the alpha and beta subunits. In cutaneous cells, as well as in certain pathological conditions, shedding of beta-dystroglycan can occur releasing a peptide of about 30 kDa. In terms of processing, SRC-mediated phosphorylation of the PPXY motif of the beta subunit recruits SH2 domain-containing proteins, but inhibits binding to WWW domain-containing proteins, DMD and UTRN. This phosphorylation also inhibits nuclear entry. In terms of tissue distribution, detected in brain and kidney (at protein level). Detected in sciatic nerve (at protein level). Expressed in neurons and muscle cells (at protein level). Expressed in a variety of tissues. In brain, expressed in the hippocampal formation, the olfactory bulb, the cerebellum and the thalamus. In the peripheral nerve system, expressed in Schwann cells.

It is found in the secreted. The protein localises to the extracellular space. Its subcellular location is the cell membrane. It localises to the cytoplasm. The protein resides in the cytoskeleton. It is found in the nucleus. The protein localises to the nucleoplasm. Its subcellular location is the sarcolemma. It localises to the postsynaptic cell membrane. In terms of biological role, the dystroglycan complex is involved in a number of processes including laminin and basement membrane assembly, sarcolemmal stability, cell survival, peripheral nerve myelination, nodal structure, cell migration, and epithelial polarization. Functionally, extracellular peripheral glycoprotein that acts as a receptor for extracellular matrix proteins containing laminin-G domains, and for certain adenoviruses. Receptor for laminin-2 (LAMA2) and agrin in peripheral nerve Schwann cells. Also acts as a receptor for laminin LAMA5. Its function is as follows. Transmembrane protein that plays important roles in connecting the extracellular matrix to the cytoskeleton. Acts as a cell adhesion receptor in both muscle and non-muscle tissues. Receptor for both DMD and UTRN and, through these interactions, scaffolds axin to the cytoskeleton. Also functions in cell adhesion-mediated signaling and implicated in cell polarity. The sequence is that of Dystroglycan 1 from Mus musculus (Mouse).